Consider the following 58-residue polypeptide: Small ribosomal subunit protein bS21 (58 aa).

Belongs to the bacterial ribosomal protein bS21 family.

This Staphylococcus aureus (strain bovine RF122 / ET3-1) protein is Small ribosomal subunit protein bS21.